The chain runs to 27 residues: uncharacterized protein (27 aa).

A helical membrane pass occupies residues 3–23 (IILWAVLIIFLIGLLVVTGVF).

The protein localises to the cell inner membrane. This is an uncharacterized protein from Escherichia coli (strain K12).